The primary structure comprises 728 residues: Procollagen-lysine,2-oxoglutarate 5-dioxygenase 1 (728 aa).

The N-terminal stretch at 1–18 is a signal peptide; it reads MRSLLLLAPLAWLLLVQA. N-linked (GlcNAc...) asparagine glycosylation is found at Asn-198 and Asn-539. The Fe2OG dioxygenase domain occupies 637–728; that stretch reads QFDLAFVVRY…RYIAVSFVDP (92 aa). Fe cation is bound by residues His-657 and Asp-659. Asn-687 is a glycosylation site (N-linked (GlcNAc...) asparagine). His-709 lines the Fe cation pocket. Residue Arg-719 is part of the active site.

In terms of assembly, homodimer. Identified in a complex with P3H3 and P3H4. The cofactor is Fe(2+). Requires L-ascorbate as cofactor. In terms of tissue distribution, highly expressed in the liver, heart, lung, skeletal muscle and kidney.

It localises to the rough endoplasmic reticulum membrane. It carries out the reaction L-lysyl-[collagen] + 2-oxoglutarate + O2 = (5R)-5-hydroxy-L-lysyl-[collagen] + succinate + CO2. Part of a complex composed of PLOD1, P3H3 and P3H4 that catalyzes hydroxylation of lysine residues in collagen alpha chains and is required for normal assembly and cross-linkling of collagen fibrils. Forms hydroxylysine residues in -Xaa-Lys-Gly- sequences in collagens. These hydroxylysines serve as sites of attachment for carbohydrate units and are essential for the stability of the intermolecular collagen cross-links. In Mus musculus (Mouse), this protein is Procollagen-lysine,2-oxoglutarate 5-dioxygenase 1 (Plod1).